Consider the following 754-residue polypeptide: uncharacterized protein (754 aa).

10 consecutive transmembrane segments (helical) span residues 3–23, 24–44, 50–70, 223–243, 254–274, 320–340, 370–390, 392–412, 446–466, and 471–491; these read ITTV…LPQL, PGTL…FIPV, IALT…ILWA, HLMA…AGLI, WIHW…YAWL, VAIL…LIFW, LLLM…SFIA, LLAI…AMVV, WINI…LLVV, and AWRT…WPLW.

It to B.subtilis ComEC, N.gonorrhoeae ComA, and H.influenzae Rec2.

It localises to the cell membrane. This is an uncharacterized protein from Escherichia coli (strain K12).